A 145-amino-acid chain; its full sequence is 3-dehydroquinate dehydratase (145 aa).

Residue Tyr23 is the Proton acceptor of the active site. The substrate site is built by Asn75, His81, and Asp88. Catalysis depends on His101, which acts as the Proton donor. Residues 102-103 (LS) and Arg112 contribute to the substrate site.

It belongs to the type-II 3-dehydroquinase family. Homododecamer.

It catalyses the reaction 3-dehydroquinate = 3-dehydroshikimate + H2O. The protein operates within metabolic intermediate biosynthesis; chorismate biosynthesis; chorismate from D-erythrose 4-phosphate and phosphoenolpyruvate: step 3/7. In terms of biological role, catalyzes a trans-dehydration via an enolate intermediate. This Legionella pneumophila (strain Lens) protein is 3-dehydroquinate dehydratase.